The following is a 197-amino-acid chain: MTAITITDAAHDYLADLLEKQNTPGIGIRVFITQPGTQYAETCIAYCKPGEEKPEDKAIGLKSFTAWIDGFSEAFLDDAVVDYATDRMGGQLTIKAPNAKVPMVNADSPINERINYYLQTEINPGLASHGGQVTLIDVVEEETKNIAVLQFGGGCQGCGQADVTLKEGIERTLLERIPELSGVRDVTDHTQKENAYY.

2 residues coordinate [4Fe-4S] cluster: cysteine 155 and cysteine 158.

It belongs to the NfuA family. In terms of assembly, homodimer. Requires [4Fe-4S] cluster as cofactor.

In terms of biological role, involved in iron-sulfur cluster biogenesis. Binds a 4Fe-4S cluster, can transfer this cluster to apoproteins, and thereby intervenes in the maturation of Fe/S proteins. Could also act as a scaffold/chaperone for damaged Fe/S proteins. This chain is Fe/S biogenesis protein NfuA, found in Pseudomonas syringae pv. syringae (strain B728a).